We begin with the raw amino-acid sequence, 428 residues long: Serine--tRNA ligase (428 aa).

An L-serine-binding site is contributed by 231-233 (TSE). Residues 262–264 (RRE) and V278 each bind ATP. E285 provides a ligand contact to L-serine. 349-352 (ELTS) contributes to the ATP binding site. T384 provides a ligand contact to L-serine.

It belongs to the class-II aminoacyl-tRNA synthetase family. Type-1 seryl-tRNA synthetase subfamily. As to quaternary structure, homodimer. The tRNA molecule binds across the dimer.

It is found in the cytoplasm. The catalysed reaction is tRNA(Ser) + L-serine + ATP = L-seryl-tRNA(Ser) + AMP + diphosphate + H(+). The enzyme catalyses tRNA(Sec) + L-serine + ATP = L-seryl-tRNA(Sec) + AMP + diphosphate + H(+). Its pathway is aminoacyl-tRNA biosynthesis; selenocysteinyl-tRNA(Sec) biosynthesis; L-seryl-tRNA(Sec) from L-serine and tRNA(Sec): step 1/1. Catalyzes the attachment of serine to tRNA(Ser). Is also able to aminoacylate tRNA(Sec) with serine, to form the misacylated tRNA L-seryl-tRNA(Sec), which will be further converted into selenocysteinyl-tRNA(Sec). This Bifidobacterium longum (strain NCC 2705) protein is Serine--tRNA ligase.